A 64-amino-acid polypeptide reads, in one-letter code: Large ribosomal subunit protein bL35 (64 aa).

Belongs to the bacterial ribosomal protein bL35 family.

This chain is Large ribosomal subunit protein bL35, found in Vibrio parahaemolyticus serotype O3:K6 (strain RIMD 2210633).